A 2116-amino-acid polypeptide reads, in one-letter code: MEKLLDEVLAPGGPYNLTVGSWVRDHVRSIVEGAWEVRDVVTAAQKRAIVAVIPRPVFTQMQVSDHPALHAISRYTRRHWIEWGPKEALHVLIDPSPGLLREVARVERRWVALCLHRTARKLATALAETASEAWHADYVCALRGAPSGPFYVHPEDVPHGGRAVADRCLLYYTPMQMCELMRTIDATLLVAVDLWPVALAAHVGDDWDDLGIAWHLDHDGGCPADCRGAGAGPTPGYTRPCTTRIYQVLPDTAHPGRLYRCGPRLWTRDCAVAELSWEVAQHCGHQARVRAVRCTLPIRHVRSLQPSARVRLPDLVHLAEVGRWRWFSLPRPVFQRMLSYCKTLSPDAYYSERVFKFKNALSHSITLAGNVLQEGWKGTCAEEDALCAYVAFRAWQSNARLAGIMKSAKRCAADSLSVAGWLDTIWDAIKRFFGSVPLAERMEEWEQDAAVAAFDRGPLEDGGRHLDTVQPPKSPPRPEIAATWIVHAASADRHCACAPRRDAPRERPSAPAGPPDDEALIPPWLFAERRALRCREWDFEALRARADTAAAPAPLAPRPARCPTVLYRHPAHYGPWLTLDEPGEADAALVLCDPLGQPLRGPERHFAAGAHMCAQARGLQAFVRVVPPPERPWADGGARAWAKFFRGCAWAQRLLGEPAVMHLPYTDGDVPQLIALALRTLAQQGAALALSVRDLPGGAAFDANAVTAAVRAGPGQSAATSPPPGDPPPPRRARRSQRHLDARGTPPPAPARDPPPPAPSPPAPPRAGDPVLPTSAGPADRARHAELEVAYEPSDPPTPTKADPDSDIVESYARAAGPVHLRVRDIMDPPPGCKVVVNAANEGLLAGSGVCGAIFANATAALAADCRRLAPCPTGEAVATPGHGCGYTHIIHAVAPRRPRDPAALEEGEALLERAYRSIVALAAARRWACVACPLLGAGVYGWSAAESLRAALAATRAEPAERVSLHICHPDRATLTHASVLVGAGLAARRVSPPPTEPLASCPAGDPGRPAQRSASPPATPLGDATAPEPRGCQGCELCRYTRVTNDRAYVNLWLERDRGATSWAMRIPEVVVYGPEHLATHFPLNHYSVLKPAEVRPPRGMCGSDMWRCRGWQGMPQVRCTPSNAHAALCRTGVPPRVSTRGGELDPNTCWLRAAASVAQAARACGAYTSAGCPKCAYGRALSEARTHEDFAALSQRWSASHADASPDGTGDPLDPLMETVGCACSRVWVGSEHEAPPDHLLVSLHRAPNGPWGVVLEVRARPEGGNPTGHFVCAVGGGPRRVSDRPHLWLAVPLSRGGGTCAATDEGLAQAYYDDLEVRRLGDDAMARAALASVQRPRKGPYNIRVWDMAAGAGKTTRILAAFTREDLYVCPTNALLHEIQAKLRARDIDIKNAATYERALTKPLAAYRRIYIDEAFTLGGEYCAFVASQTTAEVICVGDRDQCGPHYANNCRTPVPDRWPTERSRHTWRFPDCWAARLRAGLDYDIEGERTGTFACNLWDGRQVDLHLAFSRETVRRLHEAGIRAYTVREAQGMSVGTACIHVGRDGTDVALALTRDLAIVSLTRASDALYLHELEDGSLRAAGLSAFLDAGALAELKEVPAGIDRVVAVEQAPPPLPPADGIPEAQDVPPFCPRTLEELVFGRAGHPHYADLNRVTEGEREVRYMRISRHLLNKNHTEMPGTERVLSAVCAVRRYRAGEDGSTLRTAVARQHPRPFRQIPPPRVTAGVAQEWRMTYLRERIDLTDVYTQMGVAARELTDRYARRYPEIFAGMCTAQSLSVPAFLKATLKCVDAALGPRDTEDCHAAQGKAGLEIRAWAKEWVQVMSPHFRAIQKIIMRALRPQFLVAAGHTEPEVDAWWQAHYTTNAIEVDFTEFDMNQTLATRDVELEISAALLGLPCAEDYRALRAGSYCTLRELGSTETGCERTSGEPATLLHNTTVAMCMAMRMVPKGVRWAGIFQGDDMVIFLPEGARSAALKWTPAEVGLFGFHIPVKHVSTPTPSFCGHVGTAAGLFHDVMHQAIKVLCRRFDPDVLEEQQVALLDRLRGVYAALPDTVAANAAYYDYSAERVLAIVRELTAYARGRGLDHPATIGALEEIQTPYARANLHDAD.

The segment at 36–49 (EVRDVVTAAQKRAI) is required for efficient proteolysis and P150-P90 interaction. In terms of domain architecture, Alphavirus-like MT spans 57 to 247 (VFTQMQVSDH…TRPCTTRIYQ (191 aa)). 2 stretches are compositionally biased toward basic and acidic residues: residues 457 to 467 (GPLEDGGRHLD) and 497 to 508 (CAPRRDAPRERP). 3 disordered regions span residues 457–477 (GPLEDGGRHLDTVQPPKSPPR), 497–519 (CAPRRDAPRERPSAPAGPPDDEA), and 712–780 (AGPG…GPAD). Composition is skewed to pro residues over residues 721–730 (SPPPGDPPPP) and 745–767 (TPPPAPARDPPPPAPSPPAPPRA). 3 consecutive short sequence motifs (pxxPxR; class II SH3-binding) follow at residues 727-732 (PPPPRR), 747-752 (PPAPAR), and 761-766 (PPAPPR). In terms of domain architecture, Macro spans 806 to 985 (SDIVESYARA…LTHASVLVGA (180 aa)). Positions 992 to 1031 (VSPPPTEPLASCPAGDPGRPAQRSASPPATPLGDATAPEP) are disordered. The Peptidase C27 domain maps to 1000–1301 (LASCPAGDPG…WLAVPLSRGG (302 aa)). Residue C1152 is the For cysteine protease activity of the active site. An interaction with host CALM1 region spans residues 1152–1183 (CWLRAAASVAQAARACGAYTSAGCPKCAYGRA). The Zn(2+) site is built by C1175, C1178, C1227, and H1273. Residues 1193–1228 (FAALSQRWSASHADASPDGTGDPLDPLMETVGCACS) form an EF-hand-like region. The active-site For cysteine protease activity is the H1273. The 149-residue stretch at 1320 to 1468 (EVRRLGDDAM…VPDRWPTERS (149 aa)) folds into the (+)RNA virus helicase ATP-binding domain. 1352-1359 (MAAGAGKT) lines the a ribonucleoside 5'-triphosphate pocket. A (+)RNA virus helicase C-terminal domain is found at 1469–1609 (RHTWRFPDCW…ELKEVPAGID (141 aa)). Residues 1700–1900 (YRAGEDGSTL…VELEISAALL (201 aa)) form an involved in P150-P90 interaction region. In terms of domain architecture, RdRp catalytic spans 1870–1981 (TNAIEVDFTE…FLPEGARSAA (112 aa)). The Human RB1 binding signature appears at 1902–1906 (LPCAE).

In terms of assembly, interacts with RNA-directed RNA polymerase p90. Interacts with host CALM1; this interaction is necessary for the protease activity and viral infectivity. Interacts with host C1QBP. Interacts with the capsid protein. As to quaternary structure, interacts with human RB1/retinoblastoma protein. Interacts with protease/methyltransferase p150. The cofactor is Zn(2+). Post-translationally, specific enzymatic cleavage by its own cysteine protease yield mature proteins p150 and p90.

The protein localises to the host membrane. The protein resides in the host cytoplasm. It localises to the host perinuclear region. The enzyme catalyses RNA(n) + a ribonucleoside 5'-triphosphate = RNA(n+1) + diphosphate. The catalysed reaction is a ribonucleoside 5'-triphosphate + H2O = a ribonucleoside 5'-diphosphate + phosphate + H(+). It carries out the reaction ATP + H2O = ADP + phosphate + H(+). Functionally, probable principal replicase for the negative-strand DNA, which replicates the 40S (+) genomic RNA into (-) antigenomic RNA. It cannot replicate the (-) into (+) until cleaved into p150 and p90 mature proteins. Its function is as follows. Protease that cleaves the precursor polyprotein into two mature products. Together with RNA-directed RNA polymerase p90, replicates the 40S genomic and antigenomic RNA by recognizing replications specific signals. The heterodimer P150/p90 is probably the principal replicase for positive-strand genomic RNA and the 24S subgenomic RNA, which codes for structural proteins. Responsible for the mRNA-capping of the viral mRNAs. This function is necessary since all viral RNAs are synthesized in the cytoplasm, and host capping enzymes are restricted to the nucleus. Forms fibers late in the infection that may be involved in cell-to-cell spread of the virus RNA in the absence of virus particle formation. In terms of biological role, together with protease/methyltransferase p150, replicates the 40S genomic and antigenomic RNA by recognizing replications specific signals. The heterodimer P150/p90 is probably the principal replicase for positive-strand genomic RNA and the 24S subgenomic RNA, which codes for structural proteins. A helicase activity is probably also present. The sequence is that of Non-structural polyprotein p200 from Homo sapiens (Human).